Consider the following 308-residue polypeptide: Ribosome maturation factor RimP (308 aa).

Disordered regions lie at residues 1–31 (MARA…AADA), 94–113 (EDIG…AAGG), and 249–308 (DLDE…EMNR). Residues 17 to 31 (APSRRTGGARAAADA) are compositionally biased toward low complexity. Residues 99–113 (DGAGGTGGSGGAAGG) are compositionally biased toward gly residues. A compositionally biased stretch (acidic residues) spans 249–269 (DLDEGLEDDDGLEDEDDEDEY).

This sequence belongs to the RimP family.

The protein resides in the cytoplasm. Its function is as follows. Required for maturation of 30S ribosomal subunits. This Parafrankia sp. (strain EAN1pec) protein is Ribosome maturation factor RimP.